A 261-amino-acid polypeptide reads, in one-letter code: Carbonic anhydrase 1 (261 aa).

At A2 the chain carries N-acetylalanine. The 258-residue stretch at 4 to 261 (SDWGYDSPNG…LKGRTVRAFF (258 aa)) folds into the Alpha-carbonic anhydrase domain. H65 acts as the Proton donor/acceptor in catalysis. Zn(2+) contacts are provided by H95, H97, and H120. Substrate-binding positions include T200 and 200–201 (TH).

The protein belongs to the alpha-carbonic anhydrase family. Zn(2+) is required as a cofactor.

It localises to the cytoplasm. It carries out the reaction hydrogencarbonate + H(+) = CO2 + H2O. It catalyses the reaction urea = cyanamide + H2O. Its activity is regulated as follows. Inhibited by acetazolamide. Catalyzes the reversible hydration of carbon dioxide. Can hydrate cyanamide to urea. The chain is Carbonic anhydrase 1 (CA1) from Equus caballus (Horse).